Reading from the N-terminus, the 185-residue chain is Intraflagellar transport protein 22 homolog (185 aa).

GTP-binding positions include 10–17, 63–67, and 123–126; these read GPCESGKT, DCGGD, and HKPG. Phosphoserine is present on serine 137.

It belongs to the small GTPase superfamily. Rab family. As to quaternary structure, component of the IFT complex B, at least composed of IFT20, IFT22, IFT25, IFT27, IFT46, IFT52, TRAF3IP1/IFT54, IFT57, IFT74, IFT80, IFT81, and IFT88. Interacts with IFT88. Interacts with CFAP61.

It localises to the cell projection. The protein resides in the cilium. Small GTPase-like component of the intraflagellar transport (IFT) complex B. The protein is Intraflagellar transport protein 22 homolog (IFT22) of Macaca fascicularis (Crab-eating macaque).